Here is a 512-residue protein sequence, read N- to C-terminus: Circadian clock oscillator protein KaiC (512 aa).

KaiC domains follow at residues 1–243 (MQFP…ISIF) and 257–512 (VRVS…SSED). Positions 45, 46, 47, 48, 49, 85, 220, 221, 222, 224, 226, 286, 287, 288, 289, 290, 291, and 292 each coordinate ATP. Threonine 49 serves as a coordination point for Mg(2+). Threonine 291 contributes to the Mg(2+) binding site. Glutamate 314 provides a ligand contact to Mg(2+). An ATP-binding site is contributed by tryptophan 327. Phosphoserine; by autocatalysis is present on serine 427. Position 428 is a phosphothreonine; by autocatalysis (threonine 428). The ATP site is built by arginine 447, lysine 453, methionine 454, arginine 455, serine 457, histidine 459, and lysine 461.

This sequence belongs to the KaiC family. As to quaternary structure, homohexamer; hexamerization is dependent on ATP-binding. The KaiABC complex composition changes during the circadian cycle to control KaiC phosphorylation. Complexes KaiC(6), KaiA(2-4):KaiC(6), KaiB(6):KaiC(6) and KaiC(6):KaiB(6):KaiA(12) are among the most important forms, many form cooperatively. KaiC interacts with SasA, activating its autokinase function and leading to RpaA activation. It depends on Mg(2+) as a cofactor. In terms of processing, phosphorylated on serine and threonine residues by autocatalysis. Has a 4 step phosphorylation cycle; the autokinase acts first on Thr-428, then Ser-427. When Ser-427 is modified KaiC switches to an autophosphatase mode, acting first on phospho-Thr-428 then phospho-Ser-427.

It carries out the reaction L-seryl-[protein] + ATP = O-phospho-L-seryl-[protein] + ADP + H(+). The catalysed reaction is L-threonyl-[protein] + ATP = O-phospho-L-threonyl-[protein] + ADP + H(+). The enzyme catalyses ATP + H2O = ADP + phosphate + H(+). The interaction with KaiA enhances its phosphorylation status, while the interaction with KaiB decreases it. Functionally, central component of the KaiABC oscillator complex, which constitutes the main circadian regulator in cyanobacteria. Complex composition changes during the circadian cycle to control KaiC phosphorylation. KaiA stimulates KaiC autophosphorylation, while KaiB sequesters KaiA, leading to KaiC autodephosphorylation. Clock output pathways impact the RpaA transcriptional regulator. KaiC enhances the autophosphorylation activity of SasA, which then transfers its phosphate group to RpaA to activate it. KaiB and KaiC together enhance the phospho-RpaA dephosphatase activity of CikA. Has a weak, temperature-independent ATPase activity; ATPase activity defines the circadian period. The phosphorylation state of KaiC modulates its ATPase activity and effects KaiB binding. This Parasynechococcus marenigrum (strain WH8102) protein is Circadian clock oscillator protein KaiC.